Reading from the N-terminus, the 293-residue chain is Formamidopyrimidine-DNA glycosylase (293 aa).

P2 functions as the Schiff-base intermediate with DNA in the catalytic mechanism. E3 acts as the Proton donor in catalysis. K58 functions as the Proton donor; for beta-elimination activity in the catalytic mechanism. DNA contacts are provided by H104, R123, and R166. An FPG-type zinc finger spans residues 257–293; sequence AVYDREGEPCRSKGCDGVVKRFVQNGRSTFWCPKCQK. The Proton donor; for delta-elimination activity role is filled by R283.

It belongs to the FPG family. In terms of assembly, monomer. The cofactor is Zn(2+).

It carries out the reaction Hydrolysis of DNA containing ring-opened 7-methylguanine residues, releasing 2,6-diamino-4-hydroxy-5-(N-methyl)formamidopyrimidine.. The enzyme catalyses 2'-deoxyribonucleotide-(2'-deoxyribose 5'-phosphate)-2'-deoxyribonucleotide-DNA = a 3'-end 2'-deoxyribonucleotide-(2,3-dehydro-2,3-deoxyribose 5'-phosphate)-DNA + a 5'-end 5'-phospho-2'-deoxyribonucleoside-DNA + H(+). Functionally, involved in base excision repair of DNA damaged by oxidation or by mutagenic agents. Acts as a DNA glycosylase that recognizes and removes damaged bases. Has a preference for oxidized purines, such as 7,8-dihydro-8-oxoguanine (8-oxoG). Has AP (apurinic/apyrimidinic) lyase activity and introduces nicks in the DNA strand. Cleaves the DNA backbone by beta-delta elimination to generate a single-strand break at the site of the removed base with both 3'- and 5'-phosphates. The sequence is that of Formamidopyrimidine-DNA glycosylase from Rhodopseudomonas palustris (strain BisB18).